A 740-amino-acid polypeptide reads, in one-letter code: NAD(P)H-quinone oxidoreductase subunit 5, chloroplastic (740 aa).

A run of 16 helical transmembrane segments spans residues 9-29, 40-60, 89-109, 125-145, 147-167, 185-205, 221-241, 258-278, 283-303, 327-347, 354-374, 396-416, 425-445, 547-567, 606-626, and 718-738; these read WIIP…LLLF, WSFL…YLSI, IDPL…FVLI, FAYM…SNLI, IYFF…FWFT, GDFG…SFEF, VNLL…IAKS, TPIS…FLVA, LFIV…ITIL, LGYM…FHLI, ALLF…VGYS, TAFL…CFWS, LLFS…TAFY, ILFP…IGIP, FSVS…KPFY, and ISSY…FLKI.

The protein belongs to the complex I subunit 5 family. As to quaternary structure, NDH is composed of at least 16 different subunits, 5 of which are encoded in the nucleus.

The protein resides in the plastid. It localises to the chloroplast thylakoid membrane. It carries out the reaction a plastoquinone + NADH + (n+1) H(+)(in) = a plastoquinol + NAD(+) + n H(+)(out). The enzyme catalyses a plastoquinone + NADPH + (n+1) H(+)(in) = a plastoquinol + NADP(+) + n H(+)(out). Its function is as follows. NDH shuttles electrons from NAD(P)H:plastoquinone, via FMN and iron-sulfur (Fe-S) centers, to quinones in the photosynthetic chain and possibly in a chloroplast respiratory chain. The immediate electron acceptor for the enzyme in this species is believed to be plastoquinone. Couples the redox reaction to proton translocation, and thus conserves the redox energy in a proton gradient. This Aethionema grandiflorum (Persian stone-cress) protein is NAD(P)H-quinone oxidoreductase subunit 5, chloroplastic (ndhF).